A 143-amino-acid polypeptide reads, in one-letter code: uncharacterized protein (143 aa).

Residues 111–143 (VTQDISHTSGKSPTPKAKSSSPKKSKKKNWIPL) form a disordered region. A compositionally biased stretch (low complexity) spans 119–130 (SGKSPTPKAKSS). The span at 131–143 (SPKKSKKKNWIPL) shows a compositional bias: basic residues.

Belongs to the chlamydial CPn_0742/CT_635/TC_0003 family.

This is an uncharacterized protein from Chlamydia muridarum (strain MoPn / Nigg).